Consider the following 64-residue polypeptide: Large ribosomal subunit protein bL35 (64 aa).

This sequence belongs to the bacterial ribosomal protein bL35 family.

The sequence is that of Large ribosomal subunit protein bL35 from Chloroherpeton thalassium (strain ATCC 35110 / GB-78).